Consider the following 519-residue polypeptide: Cytochrome P450 4A22 (519 aa).

Positions 1 to 4 (MSVS) are excised as a propeptide. E321 lines the heme pocket. Position 440 is a phosphoserine (S440). C457 provides a ligand contact to heme.

The protein belongs to the cytochrome P450 family.

It is found in the endoplasmic reticulum membrane. It localises to the microsome membrane. It catalyses the reaction an omega-methyl-long-chain fatty acid + reduced [NADPH--hemoprotein reductase] + O2 = an omega-hydroxy-long-chain fatty acid + oxidized [NADPH--hemoprotein reductase] + H2O + H(+). Functionally, catalyzes the omega- and (omega-1)-hydroxylation of various fatty acids such as laurate and palmitate. Shows no activity towards arachidonic acid and prostaglandin A1. Lacks functional activity in the kidney and does not contribute to renal 20-hydroxyeicosatetraenoic acid (20-HETE) biosynthesis. This Homo sapiens (Human) protein is Cytochrome P450 4A22 (CYP4A22).